We begin with the raw amino-acid sequence, 546 residues long: Casein kinase I homolog 2 (546 aa).

2 stretches are compositionally biased toward polar residues: residues M1–R33 and H44–N55. A disordered region spans residues M1–D67. An N-acetylserine modification is found at S2. The Protein kinase domain maps to Y76 to M360. Residues I82–L90 and K105 contribute to the ATP site. D195 acts as the Proton acceptor in catalysis. Disordered stretches follow at residues N373–A425 and Q443–C546. The span at Q412–A425 shows a compositional bias: low complexity. Basic and acidic residues predominate over residues D453–K465. S455 bears the Phosphoserine mark. Residue K465 forms a Glycyl lysine isopeptide (Lys-Gly) (interchain with G-Cter in ubiquitin) linkage. Positions Q475–Q496 are enriched in low complexity. Over residues F497–R530 the composition is skewed to polar residues. Positions N533–C546 are enriched in low complexity. 2 S-palmitoyl cysteine lipidation sites follow: C545 and C546.

Belongs to the protein kinase superfamily. CK1 Ser/Thr protein kinase family. Casein kinase I subfamily. Palmitoylated by AKR1, which is required for proper plasma membrane localization of YCK2.

It is found in the cell membrane. It carries out the reaction L-seryl-[protein] + ATP = O-phospho-L-seryl-[protein] + ADP + H(+). The enzyme catalyses L-threonyl-[protein] + ATP = O-phospho-L-threonyl-[protein] + ADP + H(+). Functionally, casein kinases are operationally defined by their preferential utilization of acidic proteins such as caseins as substrates. The sequence is that of Casein kinase I homolog 2 (YCK2) from Saccharomyces cerevisiae (strain ATCC 204508 / S288c) (Baker's yeast).